The sequence spans 93 residues: UPF0223 protein SAG0995 (93 aa).

The protein belongs to the UPF0223 family.

This is UPF0223 protein SAG0995 from Streptococcus agalactiae serotype V (strain ATCC BAA-611 / 2603 V/R).